We begin with the raw amino-acid sequence, 120 residues long: Large ribosomal subunit protein uL18 (120 aa).

It belongs to the universal ribosomal protein uL18 family. In terms of assembly, part of the 50S ribosomal subunit; part of the 5S rRNA/L5/L18/L25 subcomplex. Contacts the 5S and 23S rRNAs.

In terms of biological role, this is one of the proteins that bind and probably mediate the attachment of the 5S RNA into the large ribosomal subunit, where it forms part of the central protuberance. This is Large ribosomal subunit protein uL18 from Rippkaea orientalis (strain PCC 8801 / RF-1) (Cyanothece sp. (strain PCC 8801)).